The chain runs to 136 residues: Protein NrdI (136 aa).

Belongs to the NrdI family.

Probably involved in ribonucleotide reductase function. This Salmonella paratyphi B (strain ATCC BAA-1250 / SPB7) protein is Protein NrdI.